The chain runs to 347 residues: Ribosomal RNA small subunit methyltransferase C (347 aa).

The protein belongs to the methyltransferase superfamily. RsmC family. Monomer.

The protein resides in the cytoplasm. The enzyme catalyses guanosine(1207) in 16S rRNA + S-adenosyl-L-methionine = N(2)-methylguanosine(1207) in 16S rRNA + S-adenosyl-L-homocysteine + H(+). Specifically methylates the guanine in position 1207 of 16S rRNA in the 30S particle. This Yersinia pseudotuberculosis serotype IB (strain PB1/+) protein is Ribosomal RNA small subunit methyltransferase C.